A 175-amino-acid chain; its full sequence is Dof zinc finger protein DOF1.5 (175 aa).

The segment at 29 to 57 (EEQQQQQQPELQATTAVRSPSSDLTAEKR) is disordered. A compositionally biased stretch (polar residues) spans 37–52 (PELQATTAVRSPSSDL). Residues 62–116 (IPCPRCKSMETKFCYFNNYNVNQPRHFCKGCQRYWTAGGALRNVPVGAGRRKSKP) form a Dof-type zinc finger. Zn(2+) is bound by residues cysteine 64, cysteine 67, cysteine 89, and cysteine 92. Positions 162 to 168 (PVKRLRC) match the Nuclear localization signal motif.

The protein localises to the nucleus. Its function is as follows. Transcription factor that binds specifically to a 5'-AA[AG]G-3' consensus core sequence. Acts as a negative regulator in the phytochrome-mediated light responses. Controls phyB-mediated end-of-day response and the phyA-mediated anthocyanin accumulation. Not involved in direct flowering time regulation. In Arabidopsis thaliana (Mouse-ear cress), this protein is Dof zinc finger protein DOF1.5 (DOF1.5).